Here is a 523-residue protein sequence, read N- to C-terminus: MAAALQVLPCLLRAPSRPFLWGPPVARMTSGMALAEQARQLFDSAVGAVQPGPMLQRTLSLDPSGKQLKVRDRTFQLQENLYLVGFGKAVLGMAAAADELLGQHLVQGVISVPKGIRAAVELAGKQEMLLKPHSHIQVFEGAEDNLPDRDALRAAQAIQQLAERLTADDLLLVLISGGGSALLPAPIPPVTLEEKQTLTKLLAARGATIQELNTIRKALSQLKGGGLAQAAYPAQVVSLILSDVIGDPLEVIASGPTVASTHSVQDCLHILNHYGLRAALPRSVKTVLSRADSDPHGPHTCGHVLNVIIGSNSLALAEAQRQAEVLGYHAMVLSTAMQGDVRRVAQFYGLLARVAAACLTSSTAERPLEEEAKLHQLAAELQLPDLQLEEALEAVAKAKGPVCLLAGGEPTVQLQGSGKGGRNQELALRVGAELGKQPLGPVDVLFLSGGTDGQDGPTKVAGAWVMSDLVSQASAENLDFATFLDNNDSYTFFCSFQGGTHLLHTGLTGTNVMDVHLLVFHPQ.

At S60 the chain carries Phosphoserine. K200 carries the N6-acetyllysine modification.

Belongs to the glycerate kinase type-2 family.

The protein localises to the cytoplasm. The enzyme catalyses (R)-glycerate + ATP = (2R)-3-phosphoglycerate + ADP + H(+). This is Glycerate kinase (Glyctk) from Rattus norvegicus (Rat).